The primary structure comprises 290 residues: 4-diphosphocytidyl-2-C-methyl-D-erythritol kinase (290 aa).

Lys13 is a catalytic residue. Residue Pro96–Ser106 participates in ATP binding. The active site involves Asp138.

It belongs to the GHMP kinase family. IspE subfamily.

It catalyses the reaction 4-CDP-2-C-methyl-D-erythritol + ATP = 4-CDP-2-C-methyl-D-erythritol 2-phosphate + ADP + H(+). It functions in the pathway isoprenoid biosynthesis; isopentenyl diphosphate biosynthesis via DXP pathway; isopentenyl diphosphate from 1-deoxy-D-xylulose 5-phosphate: step 3/6. In terms of biological role, catalyzes the phosphorylation of the position 2 hydroxy group of 4-diphosphocytidyl-2C-methyl-D-erythritol. This Vibrio campbellii (strain ATCC BAA-1116) protein is 4-diphosphocytidyl-2-C-methyl-D-erythritol kinase.